We begin with the raw amino-acid sequence, 66 residues long: Rho-elapitoxin-Da1b (66 aa).

4 cysteine pairs are disulfide-bonded: Cys-3–Cys-24, Cys-17–Cys-42, Cys-46–Cys-58, and Cys-59–Cys-64.

Belongs to the three-finger toxin family. Short-chain subfamily. Aminergic toxin sub-subfamily. In terms of tissue distribution, expressed by the venom gland.

It is found in the secreted. Functionally, non-competitive antagonist of alpha-2 adrenergic receptors (ADRA2) in smooth muscles, and partial antagonist of D3 dopamine receptors (DRD3) (inhibits 25% of methylspiperone binding to this receptor). Also shows a low antagonism on D2 dopamine receptors (DRD2) (short isoform). Shows high affinity to adrenergic receptors (Ki=14 nM (ADRA2A), Ki=73 nM (ADRA2B), and Ki=38 nM (ADRA2C)). Increases heart rate and blood catecholamine concentrations. In Dendroaspis angusticeps (Eastern green mamba), this protein is Rho-elapitoxin-Da1b.